The chain runs to 285 residues: Probable endonuclease 4 (285 aa).

Residues histidine 69, histidine 109, glutamate 145, aspartate 179, histidine 182, histidine 216, aspartate 229, histidine 231, and glutamate 261 each contribute to the Zn(2+) site.

This sequence belongs to the AP endonuclease 2 family. Zn(2+) serves as cofactor.

It carries out the reaction Endonucleolytic cleavage to 5'-phosphooligonucleotide end-products.. Endonuclease IV plays a role in DNA repair. It cleaves phosphodiester bonds at apurinic or apyrimidinic (AP) sites, generating a 3'-hydroxyl group and a 5'-terminal sugar phosphate. The sequence is that of Probable endonuclease 4 from Salmonella schwarzengrund (strain CVM19633).